The primary structure comprises 147 residues: Large ribosomal subunit protein uL15 (147 aa).

Residues 1–12 (MTLRLNDLKPAD) show a composition bias toward basic and acidic residues. A disordered region spans residues 1-61 (MTLRLNDLKP…GFEGGQTPMQ (61 aa)). Over residues 23–33 (RGIGSGLGKTA) the composition is skewed to gly residues. A compositionally biased stretch (basic residues) spans 34–47 (GRGHKGSFARKGGG).

Belongs to the universal ribosomal protein uL15 family. Part of the 50S ribosomal subunit.

Binds to the 23S rRNA. The protein is Large ribosomal subunit protein uL15 of Xanthomonas oryzae pv. oryzae (strain MAFF 311018).